The sequence spans 333 residues: uncharacterized protein (333 aa).

This is an uncharacterized protein from Ictalurid herpesvirus 1 (strain Auburn) (IcHV-1).